We begin with the raw amino-acid sequence, 253 residues long: Imidazole glycerol phosphate synthase subunit HisF (253 aa).

Active-site residues include D11 and D130.

This sequence belongs to the HisA/HisF family. Heterodimer of HisH and HisF.

The protein resides in the cytoplasm. It catalyses the reaction 5-[(5-phospho-1-deoxy-D-ribulos-1-ylimino)methylamino]-1-(5-phospho-beta-D-ribosyl)imidazole-4-carboxamide + L-glutamine = D-erythro-1-(imidazol-4-yl)glycerol 3-phosphate + 5-amino-1-(5-phospho-beta-D-ribosyl)imidazole-4-carboxamide + L-glutamate + H(+). It participates in amino-acid biosynthesis; L-histidine biosynthesis; L-histidine from 5-phospho-alpha-D-ribose 1-diphosphate: step 5/9. Its function is as follows. IGPS catalyzes the conversion of PRFAR and glutamine to IGP, AICAR and glutamate. The HisF subunit catalyzes the cyclization activity that produces IGP and AICAR from PRFAR using the ammonia provided by the HisH subunit. The chain is Imidazole glycerol phosphate synthase subunit HisF from Clostridium beijerinckii (strain ATCC 51743 / NCIMB 8052) (Clostridium acetobutylicum).